The primary structure comprises 166 residues: Lipoprotein signal peptidase (166 aa).

4 helical membrane-spanning segments follow: residues 11-31 (VWLW…TLVV), 42-62 (LLPV…SFLS), 67-87 (WQRW…VWWL), and 90-110 (LPAT…GAIG). Active-site residues include Asp123 and Asp141. The chain crosses the membrane as a helical span at residues 133–153 (HFPVFNVADCAICIGAALLLF).

It belongs to the peptidase A8 family.

Its subcellular location is the cell inner membrane. The catalysed reaction is Release of signal peptides from bacterial membrane prolipoproteins. Hydrolyzes -Xaa-Yaa-Zaa-|-(S,diacylglyceryl)Cys-, in which Xaa is hydrophobic (preferably Leu), and Yaa (Ala or Ser) and Zaa (Gly or Ala) have small, neutral side chains.. It functions in the pathway protein modification; lipoprotein biosynthesis (signal peptide cleavage). This protein specifically catalyzes the removal of signal peptides from prolipoproteins. In Pseudoalteromonas translucida (strain TAC 125), this protein is Lipoprotein signal peptidase.